The following is a 470-amino-acid chain: Nuclear receptor subfamily 0 group B member 1 (470 aa).

Repeat copies occupy residues 1 to 67, 68 to 133, and 134 to 200. The interval 1 to 253 is 4 X 67 AA tandem repeats; that stretch reads MAGENHQWQG…RPVALKSPQV (253 aa). 3 consecutive short sequence motifs (LXXLL motif) follow at residues 13 to 17, 80 to 84, and 146 to 150; these read LYNML, LYSML, and LYSLL. Residues 201-253 form a 4; truncated repeat; sequence FCGEDHPQQGSTLYCVPTSTNQAQAAPEERPRAPWWDTSSGALRPVALKSPQV. Positions 205–469 constitute an NR LBD domain; sequence DHPQQGSTLY…DMMLEMLCTK (265 aa). The short motif at 461–466 is the AF-2 motif element; that stretch reads MMLEML.

The protein belongs to the nuclear hormone receptor family. NR0 subfamily. As to quaternary structure, homodimer. Interacts with NR5A1, NR5A2, NR0B2 and with COPS2. Interacts with ESRRB; represses ESRRB activity at the GATA6 promoter.

It is found in the nucleus. It localises to the cytoplasm. Nuclear receptor that lacks a DNA-binding domain and acts as a corepressor that inhibits the transcriptional activity of other nuclear receptors through heterodimeric interactions. Component of a cascade required for the development of the hypothalamic-pituitary-adrenal-gonadal axis. May also have a role in the development of the embryo and in the maintenance of embryonic stem cell pluripotency. This chain is Nuclear receptor subfamily 0 group B member 1 (NR0B1), found in Homo sapiens (Human).